Reading from the N-terminus, the 418-residue chain is Dual-specificity RNA methyltransferase RlmN (418 aa).

The segment at Met1 to Asp21 is disordered. The active-site Proton acceptor is Glu122. A Radical SAM core domain is found at Asp128–Asp383. Cys135 and Cys388 form a disulfide bridge. 3 residues coordinate [4Fe-4S] cluster: Cys142, Cys146, and Cys149. S-adenosyl-L-methionine-binding positions include Gly212–Glu213, Ser244, Ser266–His268, and Asn345. Cys388 acts as the S-methylcysteine intermediate in catalysis. The interval Thr393 to Ala418 is disordered. Basic and acidic residues predominate over residues Ser399–Ala408.

Belongs to the radical SAM superfamily. RlmN family. [4Fe-4S] cluster is required as a cofactor.

It is found in the cytoplasm. It carries out the reaction adenosine(2503) in 23S rRNA + 2 reduced [2Fe-2S]-[ferredoxin] + 2 S-adenosyl-L-methionine = 2-methyladenosine(2503) in 23S rRNA + 5'-deoxyadenosine + L-methionine + 2 oxidized [2Fe-2S]-[ferredoxin] + S-adenosyl-L-homocysteine. The enzyme catalyses adenosine(37) in tRNA + 2 reduced [2Fe-2S]-[ferredoxin] + 2 S-adenosyl-L-methionine = 2-methyladenosine(37) in tRNA + 5'-deoxyadenosine + L-methionine + 2 oxidized [2Fe-2S]-[ferredoxin] + S-adenosyl-L-homocysteine. Its function is as follows. Specifically methylates position 2 of adenine 2503 in 23S rRNA and position 2 of adenine 37 in tRNAs. m2A2503 modification seems to play a crucial role in the proofreading step occurring at the peptidyl transferase center and thus would serve to optimize ribosomal fidelity. The sequence is that of Dual-specificity RNA methyltransferase RlmN from Erythrobacter litoralis (strain HTCC2594).